The sequence spans 383 residues: UDP-D-xylose:L-fucose alpha-1,3-D-xylosyltransferase 3 (383 aa).

Topologically, residues 1 to 20 (MAQQSQRPISNRHISLLNRN) are cytoplasmic. The helical; Signal-anchor for type II membrane protein transmembrane segment at 21–41 (GLILLLLLALFVILGVFLPLT) threads the bilayer. At 42–383 (KSSLFMFPNT…KNRGKKHKLP (342 aa)) the chain is on the lumenal side. N-linked (GlcNAc...) asparagine glycosylation is found at Asn-50, Asn-82, and Asn-157. Positions 180-182 (DVD) match the DXD motif motif. N-linked (GlcNAc...) asparagine glycans are attached at residues Asn-212, Asn-258, Asn-301, Asn-306, Asn-357, and Asn-364.

Belongs to the glycosyltransferase 77 family. Mn(2+) is required as a cofactor. Requires Mg(2+) as cofactor. Post-translationally, glycosylated. In terms of tissue distribution, expressed around trichome support cells in the adaxial epidermis of rosette leaves, in cauline leaves, petals and both the proximal and distal ends of siliques.

It localises to the golgi apparatus membrane. Functionally, catalyzes the transfer of D-xylose from UDP-alpha-D-xylose onto L-fucose. Probably involved in the biosynthesis of rhamnogalacturonan II (RG-II) through xylosylation of the internal fucose moiety of the A-chain of RG-II, a structurally complex pectic polysaccharide of the primary cell wall. RG-II is essential for the cell wall integrity of rapidly growing tissues such as roots and pollen tube growth and elongation. This chain is UDP-D-xylose:L-fucose alpha-1,3-D-xylosyltransferase 3, found in Arabidopsis thaliana (Mouse-ear cress).